Consider the following 121-residue polypeptide: Small ribosomal subunit protein uS13 (121 aa).

The tract at residues 91–121 (HKRGLPVRGQRTRTNARTRKGPRRAAASLKK) is disordered.

Belongs to the universal ribosomal protein uS13 family. As to quaternary structure, part of the 30S ribosomal subunit. Forms a loose heterodimer with protein S19. Forms two bridges to the 50S subunit in the 70S ribosome.

Located at the top of the head of the 30S subunit, it contacts several helices of the 16S rRNA. In the 70S ribosome it contacts the 23S rRNA (bridge B1a) and protein L5 of the 50S subunit (bridge B1b), connecting the 2 subunits; these bridges are implicated in subunit movement. Contacts the tRNAs in the A and P-sites. The polypeptide is Small ribosomal subunit protein uS13 (Bordetella avium (strain 197N)).